We begin with the raw amino-acid sequence, 300 residues long: Manganese-binding lipoprotein MntA (300 aa).

An N-terminal signal peptide occupies residues 1 to 19 (MKKVCFSFVIMVIALIAAG). Cys-20 carries N-palmitoyl cysteine lipidation. Cys-20 carries S-diacylglycerol cysteine lipidation. 4 residues coordinate Mn(2+): His-68, His-130, Glu-196, and Asp-271.

It belongs to the bacterial solute-binding protein 9 family.

It localises to the cell membrane. Functionally, probably part of ATP-binding cassette (ABC) transport system MntABCD involved in manganese import. Binds manganese and delivers it to the membrane permease for translocation into the cytoplasm. This is Manganese-binding lipoprotein MntA (mntA) from Halalkalibacterium halodurans (strain ATCC BAA-125 / DSM 18197 / FERM 7344 / JCM 9153 / C-125) (Bacillus halodurans).